The primary structure comprises 232 residues: Sugar fermentation stimulation protein homolog (232 aa).

This sequence belongs to the SfsA family.

This chain is Sugar fermentation stimulation protein homolog, found in Brucella anthropi (strain ATCC 49188 / DSM 6882 / CCUG 24695 / JCM 21032 / LMG 3331 / NBRC 15819 / NCTC 12168 / Alc 37) (Ochrobactrum anthropi).